The following is a 428-amino-acid chain: Secernin-2 (428 aa).

Residue cysteine 10 is part of the active site.

This sequence belongs to the peptidase C69 family. Secernin subfamily.

This is Secernin-2 (scrn2) from Xenopus laevis (African clawed frog).